Consider the following 225-residue polypeptide: Riboflavin kinase (225 aa).

The unknown stretch occupies residues 1–89 (MPDIKYLKKL…SRIFSPDLDI (89 aa)). Residues 90-225 (LELEGKVLKG…LKKQGTENQK (136 aa)) form a riboflavin kinase region. 99-104 (GLGEGQ) is a binding site for CDP. Residues Thr128 and Asn130 each contribute to the Mg(2+) site. FMN-binding residues include Thr185 and Glu193. 198–201 (IKLR) contacts CDP.

The protein belongs to the archaeal riboflavin kinase family. Mg(2+) serves as cofactor.

The catalysed reaction is riboflavin + CTP = CDP + FMN + H(+). It participates in cofactor biosynthesis; FMN biosynthesis; FMN from riboflavin (CTP route): step 1/1. Functionally, catalyzes the CTP-dependent phosphorylation of riboflavin (vitamin B2) to form flavin mononucleotide (FMN). The polypeptide is Riboflavin kinase (ribK) (Methanosarcina barkeri (strain Fusaro / DSM 804)).